Here is a 61-residue protein sequence, read N- to C-terminus: Potassium channel toxin alpha-KTx 3.18 (61 aa).

An N-terminal signal peptide occupies residues 1–23 (MKMFFTVLVTLFVCSMIIGICEG). Cystine bridges form between cysteine 30–cysteine 50, cysteine 36–cysteine 55, and cysteine 40–cysteine 57. Lysine 60 is modified (lysine amide).

As to expression, expressed by the venom gland.

It localises to the secreted. Its function is as follows. Inhibits voltage-gated potassium channel rKv1.1/KCNA1 at nanomolar ranges (IC(50)=90 +-2 nM, reduction of current by 30% at 50 nM or toxin). This chain is Potassium channel toxin alpha-KTx 3.18, found in Mesobuthus eupeus (Lesser Asian scorpion).